A 397-amino-acid polypeptide reads, in one-letter code: S-layer protein B (397 aa).

Positions 1–24 (MVVKKTFVLSTLILISVVALVSTA) are cleaved as a signal peptide. Residues 259–314 (INALNNEVSTLRSEISSLNSTIASLNKSLANANTQISNLQSEITTLNSEIGKLNST) adopt a coiled-coil conformation. The chain crosses the membrane as a helical span at residues 373–393 (GGIIAGIIGLIVAIVAIVLVM).

It belongs to the Sulfolobales SlaB family. In terms of assembly, the mushroom-shaped unit cells of the Sulfolobales' S-layers may consist of three SlaB subunits and six SlaA subunits.

The protein localises to the secreted. Its subcellular location is the cell wall. It is found in the S-layer. The protein resides in the cell membrane. Its function is as follows. S-layer small protein. May anchor the complex to the cell membrane. The sequence is that of S-layer protein B from Saccharolobus solfataricus (strain ATCC 35092 / DSM 1617 / JCM 11322 / P2) (Sulfolobus solfataricus).